Here is a 1014-residue protein sequence, read N- to C-terminus: UvrABC system protein A (1014 aa).

ATP is bound at residue 32–39; the sequence is GLSGSGKS. ABC transporter domains lie at 314–592 and 612–941; these read WSHG…AESQ and QDPS…KFLR. 645-652 provides a ligand contact to ATP; it reads GVSGSGKS. The C4-type zinc-finger motif lies at 744-770; sequence CENCAGDGTIKIEMNFLPDVYVPCEVC. Positions 976 to 995 are enriched in low complexity; it reads TKTVTGTAAKKATATRTAKT. A disordered region spans residues 976-1014; it reads TKTVTGTAAKKATATRTAKTAVKKAAKPAAKKTTRTSKA. The segment covering 996–1014 has biased composition (basic residues); the sequence is AVKKAAKPAAKKTTRTSKA.

The protein belongs to the ABC transporter superfamily. UvrA family. As to quaternary structure, forms a heterotetramer with UvrB during the search for lesions.

Its subcellular location is the cytoplasm. Its function is as follows. The UvrABC repair system catalyzes the recognition and processing of DNA lesions. UvrA is an ATPase and a DNA-binding protein. A damage recognition complex composed of 2 UvrA and 2 UvrB subunits scans DNA for abnormalities. When the presence of a lesion has been verified by UvrB, the UvrA molecules dissociate. The polypeptide is UvrABC system protein A (Streptomyces coelicolor (strain ATCC BAA-471 / A3(2) / M145)).